The following is a 66-amino-acid chain: Beta-defensin 134 (66 aa).

Residues 1–19 form the signal peptide; it reads MKPLLVVFVFLFLWDPVLA. 3 cysteine pairs are disulfide-bonded: cysteine 32–cysteine 58, cysteine 38–cysteine 52, and cysteine 42–cysteine 59.

Belongs to the beta-defensin family.

Its subcellular location is the secreted. In terms of biological role, has antibacterial activity. In Homo sapiens (Human), this protein is Beta-defensin 134 (DEFB134).